Consider the following 114-residue polypeptide: Reprimo-like protein (114 aa).

Residues 61–81 traverse the membrane as a helical segment; sequence VVQIAVLCVLSLTVMFGIFFL.

It belongs to the reprimo family.

The protein localises to the membrane. The chain is Reprimo-like protein (rprml) from Danio rerio (Zebrafish).